The chain runs to 469 residues: Pancreatic lipase-related protein 2 (469 aa).

The N-terminal stretch at 1–17 (MLPPWTLGLLLLATVRG) is a signal peptide. Residues C21 and C27 are joined by a disulfide bond. The interval 93–105 (IHGFLDKAEDSWP) is required for galactolipase activity. Residues C109 and C120 are joined by a disulfide bond. The active-site Nucleophile is S171. The active-site Charge relay system is D195. Ca(2+)-binding residues include E206, R209, D211, and D214. A disulfide bridge connects residues C256 and C280. The tract at residues 257 to 279 (KKNVLSTITDIDGIWEGIGGFVS) is required for galactolipase activity. Residue H282 is the Charge relay system of the active site. 2 disulfide bridges follow: C304–C315 and C318–C323. N-linked (GlcNAc...) asparagine glycans are attached at residues N353 and N428. The PLAT domain occupies 357 to 469 (WRYKISVTLS…ENVLQSLYPC (113 aa)). The cysteines at positions 453 and 469 are disulfide-linked.

The protein belongs to the AB hydrolase superfamily. Lipase family. As to expression, pancreas.

It is found in the secreted. The protein localises to the zymogen granule membrane. The protein resides in the cell projection. Its subcellular location is the neuron projection. The enzyme catalyses a triacylglycerol + H2O = a diacylglycerol + a fatty acid + H(+). It catalyses the reaction a 1,2-diacyl-3-O-(beta-D-galactosyl)-sn-glycerol + 2 H2O = 3-beta-D-galactosyl-sn-glycerol + 2 a fatty acid + 2 H(+). It carries out the reaction 1,2,3-tri-(9Z-octadecenoyl)-glycerol + H2O = di-(9Z)-octadecenoylglycerol + (9Z)-octadecenoate + H(+). The catalysed reaction is di-(9Z)-octadecenoylglycerol + H2O = (9Z-octadecenoyl)-glycerol + (9Z)-octadecenoate + H(+). The enzyme catalyses (9Z-octadecenoyl)-glycerol + H2O = glycerol + (9Z)-octadecenoate + H(+). It catalyses the reaction 1-(9Z-octadecenoyl)-glycerol + H2O = glycerol + (9Z)-octadecenoate + H(+). It carries out the reaction 1,2,3-tripropanoylglycerol + H2O = dipropanoylglycerol + propanoate + H(+). The catalysed reaction is 1,2,3-tributanoylglycerol + H2O = dibutanoylglycerol + butanoate + H(+). The enzyme catalyses 1,2,3-trioctanoylglycerol + H2O = dioctanoylglycerol + octanoate + H(+). It catalyses the reaction 1,2-didecanoylglycerol + H2O = decanoylglycerol + decanoate + H(+). It carries out the reaction long chain 1,2-diacyl-3-O-beta-D-galactosyl-sn-glycerol + H2O = long chain acyl-3-O-beta-D-galactosyl-sn-glycerol + a fatty acid + H(+). The catalysed reaction is 1,2-dioctanoyl-3-O-beta-D-galactosyl-sn-glycerol + H2O = octanoyl-3-(beta-D-galactosyl)-sn-glycerol + octanoate + H(+). The enzyme catalyses 1,2-didodecanoyl-3-beta-D-galactosyl-sn-glycerol + H2O = dodecanoyl-3-beta-D-galactosyl-sn-glycerol + dodecanoate + H(+). It catalyses the reaction 1-beta-D-galactosyl-2,3-didodecanoyl-sn-glycerol + H2O = 1-beta-D-galactosyl-dodecanoyl-sn-glycerol + dodecanoate + H(+). It carries out the reaction a 1,2-diacyl-3-O-[alpha-D-galactosyl-(1-&gt;6)-beta-D-galactosyl]-sn-glycerol + H2O = acyl-3-O-[alpha-D-galactosyl-(1-&gt;6)-beta-D-galactosyl]-sn-glycerol + a fatty acid + H(+). The catalysed reaction is long chain 1,2-diacyl-3-O-[alpha-D-galactosyl-(1-&gt;6)-beta-D-galactosyl]-sn-glycerol + H2O = long chain acyl-3-O-[alpha-D-galactosyl-(1-&gt;6)-beta-D-galactosyl]-sn-glycerol + a fatty acid + H(+). The enzyme catalyses 1,2-dioctanoyl-3-O-[alpha-D-galactosyl-(1-&gt;6)-beta-D-galactosyl]-sn-glycerol + H2O = octanoyl-3-O-[alpha-D-galactosyl-(1-&gt;6)-beta-D-galactosyl]-sn-glycerol + octanoate + H(+). It catalyses the reaction 1,2-didodecanoyl-3-O-[alpha-D-galactosyl-(1-&gt;6)-beta-D-galactosyl]-sn-glycerol + H2O = dodecanoyl-3-O-[alpha-D-galactosyl-(1-&gt;6)-beta-D-galactosyl]-sn-glycerol + dodecanoate + H(+). It carries out the reaction a 1,2-diacyl-sn-glycero-3-phosphocholine + H2O = a monoacyl-sn-glycero-3-phosphocholine + a fatty acid + H(+). Its pathway is glycerolipid metabolism; triacylglycerol degradation. It participates in glycolipid metabolism. Regulated by CLPS and bile salts levels ranging 1-5 mM in neonates and 2-30 mM in healthy adults. CLPS stimulates milk fat digestion in the presence of 4 mM bile salts. Triacylglycerol lipase activity toward short- and medium-chain triglycerides is inhibited by increasing concentrations of bile salts and weakly reactivated by CLPS. Optimal triacylglycerol lipase activity is reached at bile salts concentrations ranging from 0.1 to 0.5 mM and then decreases at concentrations higher than 1 mM. Lipase activity toward long-chain glycerolipids is stimulated by CLPS in the presence of 4 mM bile salts. Galactolipase activity is inhibited at high concentrations of bile salts. Triacylglycerol lipase activity is inhibited by anti-obesity drug tetrahydrolipstatin. In terms of biological role, lipase that primarily hydrolyzes triglycerides and galactosylglycerides. In neonates, may play a major role in pancreatic digestion of dietary fats such as milk fat globules enriched in long-chain triglycerides. Hydrolyzes short-, medium- and long-chain fatty acyls in triglycerides without apparent positional specificity. Can completely deacylate triacylglycerols. When the liver matures and bile salt synthesis increases, likely functions mainly as a galactolipase and monoacylglycerol lipase. Hydrolyzes monogalactosyldiglycerols (MGDG) and digalactosyldiacylglycerols (DGDG) present in a plant-based diet, releasing long-chain polyunsaturated fatty acids. Hydrolyzes medium- and long-chain fatty acyls in galactolipids. May act together with LIPF to hydrolyze partially digested triglycerides. Hydrolyzes long-chain monoglycerides with high efficiency. In cytotoxic T cells, contributes to perforin-dependent cell lysis, but is unlikely to mediate direct cytotoxicity. Also has low phospholipase activity. In neurons, required for the localization of the phospholipid 1-oleoyl-2-palmitoyl-PC (OPPC) to neurite tips through acyl chain remodeling of membrane phospholipids. The resulting OPPC-rich lipid membrane domain recruits the t-SNARE protein STX4 by selectively interacting with the STX4 transmembrane domain and this promotes surface expression of the dopamine transporter SLC6A3/DAT at neurite tips by facilitating fusion of SLC6A3-containing transport vesicles with the plasma membrane. The sequence is that of Pancreatic lipase-related protein 2 from Homo sapiens (Human).